A 293-amino-acid chain; its full sequence is Protease HtpX (293 aa).

The next 2 helical transmembrane spans lie at 2–22 (FRIL…SVTL) and 38–58 (LTSL…ISLF). H145 contributes to the Zn(2+) binding site. Residue E146 is part of the active site. Residue H149 coordinates Zn(2+). 2 consecutive transmembrane segments (helical) span residues 156–176 (VTLA…ARII) and 193–213 (IGFF…ASII). E222 provides a ligand contact to Zn(2+).

This sequence belongs to the peptidase M48B family. Requires Zn(2+) as cofactor.

It is found in the cell inner membrane. This Hahella chejuensis (strain KCTC 2396) protein is Protease HtpX.